Here is a 117-residue protein sequence, read N- to C-terminus: Large ribosomal subunit protein bL19 (117 aa).

This sequence belongs to the bacterial ribosomal protein bL19 family.

Functionally, this protein is located at the 30S-50S ribosomal subunit interface and may play a role in the structure and function of the aminoacyl-tRNA binding site. In Shewanella halifaxensis (strain HAW-EB4), this protein is Large ribosomal subunit protein bL19.